The primary structure comprises 364 residues: uncharacterized protein (364 aa).

The next 3 helical transmembrane spans lie at Asn41–Leu61, Val298–Met318, and Leu329–Ile349.

The protein resides in the membrane. This is an uncharacterized protein from Mycoplasma capricolum subsp. capricolum (strain California kid / ATCC 27343 / NCTC 10154).